We begin with the raw amino-acid sequence, 432 residues long: Adenylosuccinate synthetase (432 aa).

Residues 12–18 and 40–42 each bind GTP; these read GDEGKGK and GHT. The active-site Proton acceptor is the Asp13. Residues Asp13 and Gly40 each coordinate Mg(2+). IMP contacts are provided by residues 13 to 16, 38 to 41, Thr132, Arg146, Gln226, Thr241, and Arg305; these read DEGK and NAGH. The active-site Proton donor is His41. 301–307 contributes to the substrate binding site; sequence TVTGRKR. Residues Arg307, 333–335, and 415–417 contribute to the GTP site; these read KLD and STS.

The protein belongs to the adenylosuccinate synthetase family. In terms of assembly, homodimer. Requires Mg(2+) as cofactor.

Its subcellular location is the cytoplasm. The catalysed reaction is IMP + L-aspartate + GTP = N(6)-(1,2-dicarboxyethyl)-AMP + GDP + phosphate + 2 H(+). Its pathway is purine metabolism; AMP biosynthesis via de novo pathway; AMP from IMP: step 1/2. In terms of biological role, plays an important role in the de novo pathway of purine nucleotide biosynthesis. Catalyzes the first committed step in the biosynthesis of AMP from IMP. The chain is Adenylosuccinate synthetase from Chelativorans sp. (strain BNC1).